A 318-amino-acid polypeptide reads, in one-letter code: MRLLAGWLCLSLASVWLARRMWTLRSPLSRSLYVNMTSGPGGPAAAAGGGKDTHQWYVCNREKLCESLQSVFVQSYLDQGTQIFLNNSIEKSGWLFIQLYHSFVSSVFSLFMSRTSINGLLGRGSMFVFSPDQFQRLLRINPDWKTHRLLDLGAGDGEVTKIMSPHFEEIYATELSETMIWQLQKKKYRVLGINEWQNTGFQYDVISCLNLLDRCDQPLTLLKDIRSVLEPTQGRVILALVLPFHPYVENVGGKWEKPSEILEIKGQNWEEQVNSLPEVFRKAGFVVEAFTRLPYLCEGDMYNDYYVLDDAVFVLRPV.

The first 18 residues, 1 to 18 (MRLLAGWLCLSLASVWLA), serve as a signal peptide directing secretion. N-linked (GlcNAc...) asparagine glycosylation occurs at N35. S-adenosyl-L-homocysteine is bound by residues E174, N210, and Y295.

The protein belongs to the METTL9 family. In terms of tissue distribution, expressed in liver, colon, small intestine, skin, kidney and to a lesser extent in spleen, lung, thymus and stomach. Not detected in fibroblast and endothelial cells.

The protein resides in the endoplasmic reticulum. The protein localises to the mitochondrion. The catalysed reaction is L-histidyl-[protein] + S-adenosyl-L-methionine = N(pros)-methyl-L-histidyl-[protein] + S-adenosyl-L-homocysteine + H(+). Protein-histidine N-methyltransferase that specifically catalyzes 1-methylhistidine (pros-methylhistidine) methylation of target proteins. Specifically methylates the second His of proteins with a His-x-His (HxH) motif (where 'x' is preferably a small amino acid), while exploiting the first one as a recognition signature. Catalyzes methylation of target proteins such as S100A9, NDUFB3, SLC39A5, SLC39A7, ARMC6 and DNAJB12; 1-methylhistidine modification may affect the binding of zinc and other metals to its target proteins. Constitutes the main methyltransferase for the 1-methylhistidine modification in cell. The sequence is that of Protein-L-histidine N-pros-methyltransferase from Mus musculus (Mouse).